Reading from the N-terminus, the 174-residue chain is Phytochrome-interacting ankyrin-repeat protein 2 (174 aa).

A compositionally biased stretch (low complexity) spans 1 to 13 (MLQEPSAAFSLRR). The segment at 1-29 (MLQEPSAAFSLRRNSFRRRSPRSNVDDRG) is disordered. A Phosphoserine modification is found at S15. ANK repeat units follow at residues 28–57 (RGWN…DVNA), 65–94 (KGVS…NIDA), and 100–129 (CGWT…FLAD).

As to quaternary structure, interacts with phytochrome A (PHYA), both in Pr and Pfr forms. Binds to PIF3, a repressor of photomorphogenesis in response to phytochrome-mediated light signaling; this interaction may trigger the repression of PHYA-mediated PIF3 phosphorylation. Interacts with SIGE/SIG5 in mitochondrion. Interacts with RPS9M (via C terminus). Phosphorylated by PHYA. In terms of tissue distribution, mostly expressed in flowers, cotyledons, leaves and siliques, and, to a lower extent, in roots and stems. Also detected at low levels in seedlings grown in continuous dark or light conditions. Expressed in male and female gametophytes.

The protein localises to the cytoplasm. It is found in the nucleus. It localises to the mitochondrion. Functionally, promotes anthocyanin accumulation through interaction with PHYA, especially in response to far-red light, high light and sucrose treatment, probably by triggering A3G2XYLT/UF3GT expression. Required for gametophytes development as well as male-female gamete recognition during fertilization, possibly by regulating mitochondrial gene expression. Represses PHYA-mediated PIF3 phosphorylation. This chain is Phytochrome-interacting ankyrin-repeat protein 2, found in Arabidopsis thaliana (Mouse-ear cress).